The following is a 248-amino-acid chain: Thiol:disulfide interchange protein DsbG (248 aa).

Residues 1 to 17 form the signal peptide; the sequence is MLKKILLLALLPAIAFA. Cys126 and Cys129 are oxidised to a cystine.

It belongs to the thioredoxin family. DsbC subfamily. As to quaternary structure, homodimer. Interacts with ErfK, YbiS and YnhG.

The protein localises to the periplasm. In terms of biological role, involved in disulfide bond formation. DsbG and DsbC are part of a periplasmic reducing system that controls the level of cysteine sulfenylation, and provides reducing equivalents to rescue oxidatively damaged secreted proteins such as ErfK, YbiS and YnhG. Probably also functions as a disulfide isomerase with a narrower substrate specificity than DsbC. DsbG is maintained in a reduced state by DsbD. Displays chaperone activity in both redox states in vitro. The sequence is that of Thiol:disulfide interchange protein DsbG (dsbG) from Escherichia coli (strain K12).